The primary structure comprises 422 residues: Solanesyl diphosphate synthase 3, chloroplastic/mitochondrial (422 aa).

Residues M1 to F32 constitute a chloroplast and mitochondrion transit peptide. The isopentenyl diphosphate site is built by K125, R128, and H174. Mg(2+)-binding residues include D181 and D185. Residue R190 coordinates an all-trans-polyprenyl diphosphate. R191 contributes to the isopentenyl diphosphate binding site. An all-trans-polyprenyl diphosphate is bound by residues K267, T268, Q305, and K322.

This sequence belongs to the FPP/GGPP synthase family. As to quaternary structure, homodimer. The cofactor is Mg(2+). In terms of tissue distribution, ubiquitous. Highest expression in seeds and shoot apical meristem.

The protein resides in the plastid. The protein localises to the chloroplast. It is found in the mitochondrion. The enzyme catalyses 5 isopentenyl diphosphate + (2E,6E,10E)-geranylgeranyl diphosphate = all-trans-nonaprenyl diphosphate + 5 diphosphate. In terms of biological role, may be involved in the supply of solanesyl diphosphate for ubiquinone-9 (UQ-9) biosynthesis in mitochondria. Synthesizes C25 to C45 medium / long-chain products depending on the type of substrate available. Can use geranyl diphosphate, farnesyl diphosphate or geranylgeranyl diphosphate as substrates, but not dimethylallyl diphosphate. The chain is Solanesyl diphosphate synthase 3, chloroplastic/mitochondrial from Arabidopsis thaliana (Mouse-ear cress).